A 452-amino-acid chain; its full sequence is uncharacterized protein (452 aa).

This is an uncharacterized protein from Acanthamoeba polyphaga (Amoeba).